A 275-amino-acid chain; its full sequence is Uridine-5'-phosphate dioxygenase (275 aa).

Residues His105, Asp107, and His247 each coordinate Fe cation.

Fe(2+) is required as a cofactor.

It carries out the reaction UMP + 2-oxoglutarate + O2 = uridine-5'-aldehyde + succinate + phosphate + CO2. The protein operates within antibiotic biosynthesis. Its activity is regulated as follows. Enhanced by ascorbic acid and inhibited by Zn(2+). Dioxygenase involved in the biosynthesis of the capuramycin-type nucleoside antibiotic A-102395. Catalyzes the dephosphorylation and oxidation of UMP to generate uridine-5'-aldehyde. Can also use the alternative alpha-keto acids pyruvate and alpha-ketoadipate (2-oxoadipate), with very low efficiency. Cannot use alpha-ketobutyrate, alpha-ketovalerate and oxaloacetate. The protein is Uridine-5'-phosphate dioxygenase of Amycolatopsis sp.